We begin with the raw amino-acid sequence, 216 residues long: 3-isopropylmalate dehydratase small subunit (216 aa).

This sequence belongs to the LeuD family. LeuD type 1 subfamily. In terms of assembly, heterodimer of LeuC and LeuD.

It catalyses the reaction (2R,3S)-3-isopropylmalate = (2S)-2-isopropylmalate. It participates in amino-acid biosynthesis; L-leucine biosynthesis; L-leucine from 3-methyl-2-oxobutanoate: step 2/4. Functionally, catalyzes the isomerization between 2-isopropylmalate and 3-isopropylmalate, via the formation of 2-isopropylmaleate. The sequence is that of 3-isopropylmalate dehydratase small subunit from Burkholderia ambifaria (strain MC40-6).